Here is a 475-residue protein sequence, read N- to C-terminus: 1,3-beta-glucanosyltransferase gel2 (475 aa).

An N-terminal signal peptide occupies residues 1–21; sequence MLPTYVRLFTAVCALATTASA. A disulfide bridge connects residues Cys-69 and Cys-98. Residues Tyr-87, Asn-159, Glu-160, and Asp-201 each contribute to the (1,3-beta-D-glucosyl)n site. The Proton donor role is filled by Glu-160. Disulfide bonds link Cys-215–Cys-350 and Cys-234–Cys-265. The N-linked (GlcNAc...) asparagine glycan is linked to Asn-236. Catalysis depends on Glu-262, which acts as the Nucleophile. Residue Tyr-294 participates in (1,3-beta-D-glucosyl)n binding. 3 N-linked (GlcNAc...) asparagine glycosylation sites follow: Asn-311, Asn-339, and Asn-357. The interval 420 to 451 is disordered; sequence GESNTPGAHSSGSTSGSSSSGGSSSSSSDKES. The span at 429–446 shows a compositional bias: low complexity; it reads SSGSTSGSSSSGGSSSSS. A lipid anchor (GPI-like-anchor amidated serine) is attached at Ser-451. Residues 452-475 constitute a propeptide, removed in mature form; sequence AAGTISVPFVGLLSAASFMAFFML.

The protein belongs to the glycosyl hydrolase 72 family. Post-translationally, the GPI-like anchor contains a phosphoceramide lipid group.

Its subcellular location is the cell membrane. Functionally, splits internally a 1,3-beta-glucan molecule and transfers the newly generated reducing end (the donor) to the non-reducing end of another 1,3-beta-glucan molecule (the acceptor) forming a 1,3-beta linkage, resulting in the elongation of 1,3-beta-glucan chains in the cell wall. Involved in cell wall morphogenesis. The polypeptide is 1,3-beta-glucanosyltransferase gel2 (gel2) (Aspergillus fumigatus (strain CBS 144.89 / FGSC A1163 / CEA10) (Neosartorya fumigata)).